A 428-amino-acid polypeptide reads, in one-letter code: Adenylosuccinate synthetase (428 aa).

Residues 12–18 (GDEGKGK) and 40–42 (GHT) each bind GTP. D13 functions as the Proton acceptor in the catalytic mechanism. Mg(2+) is bound by residues D13 and G40. Residues 13-16 (DEGK), 38-41 (NAGH), T133, R147, N224, T239, and R303 each bind IMP. Residue H41 is the Proton donor of the active site. Residue 299-305 (TTTGRRR) coordinates substrate. Residues R305, 331–333 (KLD), and 413–415 (GVG) contribute to the GTP site.

This sequence belongs to the adenylosuccinate synthetase family. Homodimer. It depends on Mg(2+) as a cofactor.

It is found in the cytoplasm. It catalyses the reaction IMP + L-aspartate + GTP = N(6)-(1,2-dicarboxyethyl)-AMP + GDP + phosphate + 2 H(+). The protein operates within purine metabolism; AMP biosynthesis via de novo pathway; AMP from IMP: step 1/2. Plays an important role in the de novo pathway and in the salvage pathway of purine nucleotide biosynthesis. Catalyzes the first committed step in the biosynthesis of AMP from IMP. This chain is Adenylosuccinate synthetase, found in Coprinopsis cinerea (strain Okayama-7 / 130 / ATCC MYA-4618 / FGSC 9003) (Inky cap fungus).